The primary structure comprises 2542 residues: Unconventional myosin-IXa (2542 aa).

The Ras-associating domain maps to 14 to 112 (NEHTLRIYPG…YRFLLREKNL (99 aa)). Residues 146 to 1017 (KDFDDLCSLP…ERQHLQDLLH (872 aa)) form the Myosin motor domain. Residues 175 to 195 (IYTYVGSILIAINPFKFLPIY) traverse the membrane as a helical segment. 239 to 246 (GESGSGKT) is a binding site for ATP. Position 755 is a phosphoserine (Ser-755). Residues 908–919 (QAEPYFVKCIRS) form an actin-binding region. 5 consecutive IQ domains span residues 1021-1041 (LRRI…QQFL), 1043-1072 (LRQA…EKDA), 1075-1104 (MASA…AAVI), 1116-1145 (RHKA…KIIL), and 1139-1168 (QRNK…EKLR). Residues 1022–1163 (RRIVLLQRWF…RARQRCNALK (142 aa)) form a neck or regulatory domain region. Positions 1164–2505 (EEKLREAKLE…LKNVKNSPQK (1342 aa)) are tail. The segment covering 1221–1240 (RESSMDFSKESPDKQQERGR) has biased composition (basic and acidic residues). The tract at residues 1221–1276 (RESSMDFSKESPDKQQERGRRQSGTDLQEDVIVRQRPKSLEDLHQKKVGRAKRESR) is disordered. At Ser-1243 the chain carries Phosphoserine. Position 1245 is a phosphothreonine (Thr-1245). Residue Ser-1259 is modified to Phosphoserine. Positions 1265–1292 (QKKVGRAKRESRRMRELEQAIFSLELLK) form a coiled coil. The span at 1266 to 1276 (KKVGRAKRESR) shows a compositional bias: basic residues. Phosphoserine occurs at positions 1300 and 1318. Positions 1342–1401 (KSKPESLILDEGELKISSPNTFTNPKSQDNALSASSETSSTLAGKGASSDSEHLKNGTAK) are disordered. Positions 1358 to 1371 (SSPNTFTNPKSQDN) are enriched in polar residues. The segment covering 1372-1384 (ALSASSETSSTLA) has biased composition (low complexity). Residues 1391 to 1401 (DSEHLKNGTAK) show a composition bias toward basic and acidic residues. The stretch at 1492-1539 (TVLKKLEKLNIEKEKRQKQLQQQNEKEMMEQIRQQTDILEKERKAFKT) forms a coiled coil. Disordered stretches follow at residues 1650–1675 (RSTE…REGS), 1693–1727 (SGNP…SVDE), 1767–1793 (GKQG…PGPD), and 1806–1841 (QYHP…KRGV). A compositionally biased stretch (basic and acidic residues) spans 1665 to 1675 (HRSDDPSREGS). Over residues 1715-1726 (QQETSQRFSSVD) the composition is skewed to polar residues. Over residues 1821–1833 (CRKEFKENKEPSP) the composition is skewed to basic and acidic residues. At Ser-1950 the chain carries Phosphoserine. 2 consecutive Phorbol-ester/DAG-type zinc fingers follow at residues 2001–2050 (GHIF…TAKC) and 2068–2119 (SRLT…DTDA). In terms of domain architecture, Rho-GAP spans 2065 to 2253 (VELSRLTSED…LIVVEQMNKY (189 aa)). Residues Ser-2293 and Ser-2296 each carry the phosphoserine modification. Residues 2324–2360 (TDQQQAAMQQEEKVLTEQIENLQKEKEELTFEMLVLE) are a coiled coil. The segment at 2361–2443 (PRASDDETLE…NTTSSHGTRK (83 aa)) is disordered. Residues 2377-2386 (TADSSENLNM) show a composition bias toward polar residues. Low complexity predominate over residues 2420–2438 (SLDSVSSSVSSCLSNTTSS). Residue Ser-2458 is modified to Phosphoserine. Residues 2465–2530 (TEGPLGQAKS…TVDSDCSSTQ (66 aa)) form a disordered region.

This sequence belongs to the TRAFAC class myosin-kinesin ATPase superfamily. Myosin family. Phosphorylated by ALPK1 following monosodium urate monohydrate (MSU)-induced inflammation. As to expression, expressed in the eye, lung, liver, brain, heart, kidney, skeletal muscle and spleen. No detection was found in liver. In the brain, expressed in the ependymal cells of the third ventricle and the aqueduct.

It is found in the membrane. It localises to the cytoplasm. The protein resides in the synapse. The protein localises to the cell projection. Its subcellular location is the growth cone. Myosins are actin-based motor molecules with ATPase activity. Unconventional myosins serve in intracellular movements. Regulates Rho by stimulating it's GTPase activity in neurons. Required for the regulation of neurite branching and motor neuron axon guidance. This is Unconventional myosin-IXa (Myo9a) from Mus musculus (Mouse).